Consider the following 372-residue polypeptide: tRNA-specific 2-thiouridylase MnmA (372 aa).

Residues 6–13 and leucine 32 each bind ATP; that span reads AMSGGVDS. Cysteine 101 serves as the catalytic Nucleophile. A disulfide bond links cysteine 101 and cysteine 193. Glycine 125 contributes to the ATP binding site. Residues 143-145 are interaction with tRNA; sequence KDQ. Residue cysteine 193 is the Cysteine persulfide intermediate of the active site.

Belongs to the MnmA/TRMU family.

The protein resides in the cytoplasm. It carries out the reaction S-sulfanyl-L-cysteinyl-[protein] + uridine(34) in tRNA + AH2 + ATP = 2-thiouridine(34) in tRNA + L-cysteinyl-[protein] + A + AMP + diphosphate + H(+). Catalyzes the 2-thiolation of uridine at the wobble position (U34) of tRNA, leading to the formation of s(2)U34. In Corynebacterium kroppenstedtii (strain DSM 44385 / JCM 11950 / CIP 105744 / CCUG 35717), this protein is tRNA-specific 2-thiouridylase MnmA.